Consider the following 94-residue polypeptide: Conotoxin Qc6.1 (94 aa).

An N-terminal signal peptide occupies residues 1-22 (MKLTCMMIVALLFLTAWTFVTA). The propeptide occupies 23–62 (VDSKNELENRGGWGQAGGWGKLFPMARDEMKNSEVSKLDN). Cystine bridges form between Cys66/Cys84, Cys73/Cys88, and Cys83/Cys92.

The protein belongs to the conotoxin O1 superfamily. As to expression, expressed by the venom duct.

It is found in the secreted. The polypeptide is Conotoxin Qc6.1 (Conus quercinus (Oak cone)).